The chain runs to 129 residues: Small ribosomal subunit protein uS12 (129 aa).

The disordered stretch occupies residues 110–129 (RKQGRSRYGAHRKQVAATKK).

The protein belongs to the universal ribosomal protein uS12 family. As to quaternary structure, part of the 30S ribosomal subunit. Contacts proteins S8 and S17. May interact with IF1 in the 30S initiation complex.

Its function is as follows. With S4 and S5 plays an important role in translational accuracy. In terms of biological role, interacts with and stabilizes bases of the 16S rRNA that are involved in tRNA selection in the A site and with the mRNA backbone. Located at the interface of the 30S and 50S subunits, it traverses the body of the 30S subunit contacting proteins on the other side and probably holding the rRNA structure together. The combined cluster of proteins S8, S12 and S17 appears to hold together the shoulder and platform of the 30S subunit. The polypeptide is Small ribosomal subunit protein uS12 (Rickettsia prowazekii (strain Madrid E)).